Consider the following 279-residue polypeptide: Pantothenate synthetase (279 aa).

26 to 33 (MGNLHEGH) contacts ATP. The Proton donor role is filled by H33. (R)-pantoate is bound at residue Q57. Q57 contacts beta-alanine. Residue 144–147 (GKKD) coordinates ATP. Position 150 (Q150) interacts with (R)-pantoate. ATP is bound by residues V173 and 181–184 (LSSR).

Belongs to the pantothenate synthetase family. In terms of assembly, homodimer.

The protein localises to the cytoplasm. The enzyme catalyses (R)-pantoate + beta-alanine + ATP = (R)-pantothenate + AMP + diphosphate + H(+). Its pathway is cofactor biosynthesis; (R)-pantothenate biosynthesis; (R)-pantothenate from (R)-pantoate and beta-alanine: step 1/1. Its function is as follows. Catalyzes the condensation of pantoate with beta-alanine in an ATP-dependent reaction via a pantoyl-adenylate intermediate. This is Pantothenate synthetase from Burkholderia ambifaria (strain MC40-6).